The primary structure comprises 257 residues: Acetylglutamate kinase (257 aa).

Substrate-binding positions include 43–44 (GG), Arg-65, and Asn-157. ATP contacts are provided by residues 180–185 (DISGIL) and 208–210 (IIT).

The protein belongs to the acetylglutamate kinase family. ArgB subfamily. In terms of assembly, homodimer.

It localises to the cytoplasm. The catalysed reaction is N-acetyl-L-glutamate + ATP = N-acetyl-L-glutamyl 5-phosphate + ADP. It participates in amino-acid biosynthesis; L-arginine biosynthesis; N(2)-acetyl-L-ornithine from L-glutamate: step 2/4. Functionally, catalyzes the ATP-dependent phosphorylation of N-acetyl-L-glutamate. This is Acetylglutamate kinase from Sodalis glossinidius (strain morsitans).